A 339-amino-acid chain; its full sequence is Ferredoxin--NADP reductase (339 aa).

FAD is bound by residues E35, Q43, Y48, V88, F122, D287, and S327.

It belongs to the ferredoxin--NADP reductase type 2 family. As to quaternary structure, homodimer. FAD is required as a cofactor.

It carries out the reaction 2 reduced [2Fe-2S]-[ferredoxin] + NADP(+) + H(+) = 2 oxidized [2Fe-2S]-[ferredoxin] + NADPH. This is Ferredoxin--NADP reductase from Leuconostoc citreum (strain KM20).